The chain runs to 552 residues: FERRY endosomal RAB5 effector complex subunit 3 (552 aa).

Residue S79 is modified to Phosphoserine.

As to quaternary structure, component of the FERRY complex composed of five subunits, TBCK, PPP1R21, FERRY3, CRYZL1 and GATD1 with a ratio of 1:2:1:2:4, respectively.

The protein localises to the cytoplasm. It localises to the early endosome. In terms of biological role, component of the FERRY complex (Five-subunit Endosomal Rab5 and RNA/ribosome intermediary). The FERRY complex directly interacts with mRNAs and RAB5A, and functions as a RAB5A effector involved in the localization and the distribution of specific mRNAs most likely by mediating their endosomal transport. The complex recruits mRNAs and ribosomes to early endosomes through direct mRNA-interaction. Plays a role in mast cell degranulation. The polypeptide is FERRY endosomal RAB5 effector complex subunit 3 (Rattus norvegicus (Rat)).